The sequence spans 92 residues: Small ribosomal subunit protein uS19 (92 aa).

This sequence belongs to the universal ribosomal protein uS19 family.

Its function is as follows. Protein S19 forms a complex with S13 that binds strongly to the 16S ribosomal RNA. This is Small ribosomal subunit protein uS19 from Limosilactobacillus reuteri (strain DSM 20016) (Lactobacillus reuteri).